Consider the following 256-residue polypeptide: Small ribosomal subunit protein eS1 (256 aa).

Alanine 2 carries the post-translational modification N-acetylalanine; partial.

This sequence belongs to the eukaryotic ribosomal protein eS1 family. Component of the small ribosomal subunit. Mature ribosomes consist of a small (40S) and a large (60S) subunit. The 40S subunit contains about 33 different proteins and 1 molecule of RNA (18S). The 60S subunit contains about 49 different proteins and 3 molecules of RNA (25S, 5.8S and 5S).

It is found in the cytoplasm. This Meyerozyma guilliermondii (strain ATCC 6260 / CBS 566 / DSM 6381 / JCM 1539 / NBRC 10279 / NRRL Y-324) (Yeast) protein is Small ribosomal subunit protein eS1.